The chain runs to 84 residues: uncharacterized protein (84 aa).

Belongs to the chlamydial CPn_0710/CT_666/TC_0037 family.

This is an uncharacterized protein from Chlamydia pneumoniae (Chlamydophila pneumoniae).